The following is a 702-amino-acid chain: Ribosomal RNA large subunit methyltransferase K/L (702 aa).

One can recognise a THUMP domain in the interval 43–154 (LIYQSLMWSR…KETASIALDL (112 aa)).

Belongs to the methyltransferase superfamily. RlmKL family.

It is found in the cytoplasm. It carries out the reaction guanosine(2445) in 23S rRNA + S-adenosyl-L-methionine = N(2)-methylguanosine(2445) in 23S rRNA + S-adenosyl-L-homocysteine + H(+). It catalyses the reaction guanosine(2069) in 23S rRNA + S-adenosyl-L-methionine = N(2)-methylguanosine(2069) in 23S rRNA + S-adenosyl-L-homocysteine + H(+). Functionally, specifically methylates the guanine in position 2445 (m2G2445) and the guanine in position 2069 (m7G2069) of 23S rRNA. The chain is Ribosomal RNA large subunit methyltransferase K/L from Salmonella agona (strain SL483).